The sequence spans 350 residues: F(420)H(2) dehydrogenase subunit H (350 aa).

8 helical membrane passes run 21–41 (GTVG…AVWI), 94–114 (VFML…AVFI), 128–148 (ISIL…FMAA), 173–193 (PLGI…IIDI), 200–220 (FVWN…ALMA), 261–281 (ILGS…PAFV), 288–308 (GLIA…MTII), and 330–350 (LLPL…YLGA).

This sequence belongs to the complex I subunit 1 family. The FPO complex is composed of at least 13 different subunits. FpoA, FpoH, FpoJ, FpoK, FpoL, FpoM and FpoN proteins constitute the membrane sector of the complex.

The protein localises to the cell membrane. The enzyme catalyses methanophenazine + reduced coenzyme F420-(gamma-L-Glu)(n) = dihydromethanophenazine + oxidized coenzyme F420-(gamma-L-Glu)(n) + H(+). In terms of biological role, component of the F(420)H(2) dehydrogenase (FPO complex) which is part of the energy-conserving F(420)H(2):heterodisulfide oxidoreductase system. The membrane-bound electron transfer system of the complex plays an important role in the metabolism of methylotrophic methanogens when the organisms grow on methanol or methylamines. Catalyzes the oxidation of methanophenazine to dihydromethanophenazine. It shuttles electrons from F(420)H(2), via FAD and iron-sulfur (Fe-S) centers, to methanophenazine (an electron carrier in the membrane). It couples the redox reaction to proton translocation (for every two electrons transferred, two hydrogen ions are translocated across the cytoplasmic membrane), and thus conserves the redox energy in a proton gradient. It also catalyzes the oxidation of F(420)H(2) with quinones such as 2,3-dimethyl-1,4-naphthoquinone, 2-methyl-1,4-naphthoquinone and tetramethyl-p-benzoquinone. This is F(420)H(2) dehydrogenase subunit H from Methanosarcina mazei (strain ATCC BAA-159 / DSM 3647 / Goe1 / Go1 / JCM 11833 / OCM 88) (Methanosarcina frisia).